The chain runs to 512 residues: Protein SHC1 (512 aa).

The segment covering 101–113 has biased composition (acidic residues); it reads EQDEFENDVEDDA. 2 disordered regions span residues 101–122 and 144–165; these read EQDE…EKSQ and DGNS…SVAL. Sel1-like repeat units follow at residues 318–353, 354–389, 390–429, and 433–470; these read PDAQ…KRLH, IESV…TKNH, PAAM…SMAS, and CGAP…ALGH.

It belongs to the SKT5 family.

Its subcellular location is the cytoplasm. The protein resides in the cytoplasmic granule membrane. Functionally, required for the activation of chitin synthase III (CHS3) activity during the sporulation process. In Saccharomyces cerevisiae (strain YJM789) (Baker's yeast), this protein is Protein SHC1 (SHC1).